The primary structure comprises 623 residues: Glutathione import ATP-binding protein GsiA (623 aa).

ABC transporter domains lie at 15–269 (VENL…RALL) and 314–564 (LRVR…RKLL). Residues 49 to 56 (GESGSGKS) and 357 to 364 (GESGSGKS) contribute to the ATP site.

The protein belongs to the ABC transporter superfamily. Glutathione importer (TC 3.A.1.5.11) family. As to quaternary structure, the complex is composed of two ATP-binding proteins (GsiA), two transmembrane proteins (GsiC and GsiD) and a solute-binding protein (GsiB).

The protein localises to the cell inner membrane. The catalysed reaction is glutathione(out) + ATP + H2O = glutathione(in) + ADP + phosphate + H(+). Part of the ABC transporter complex GsiABCD involved in glutathione import. Responsible for energy coupling to the transport system. This chain is Glutathione import ATP-binding protein GsiA, found in Shigella flexneri.